The sequence spans 349 residues: Ribosomal RNA large subunit methyltransferase Cfr (349 aa).

Glutamate 89 (proton acceptor) is an active-site residue. Positions 96–331 constitute a Radical SAM core domain; the sequence is KAGWESFCIS…VTVRSQFGID (236 aa). A disulfide bridge connects residues cysteine 103 and cysteine 336. Residues cysteine 110, cysteine 114, and cysteine 117 each contribute to the [4Fe-4S] cluster site. Residues 156-157, serine 187, 210-212, and asparagine 291 contribute to the S-adenosyl-L-methionine site; these read GE and SLH. The S-methylcysteine intermediate role is filled by cysteine 336.

The protein belongs to the radical SAM superfamily. RlmN family. Cfr subfamily. [4Fe-4S] cluster is required as a cofactor.

It is found in the cytoplasm. It carries out the reaction adenosine(2503) in 23S rRNA + 2 reduced [2Fe-2S]-[ferredoxin] + 2 S-adenosyl-L-methionine = 8-methyladenosine(2503) in 23S rRNA + 5'-deoxyadenosine + L-methionine + 2 oxidized [2Fe-2S]-[ferredoxin] + S-adenosyl-L-homocysteine. Specifically methylates position 8 of adenine 2503 in 23S rRNA. Confers resistance to some classes of antibiotics. The protein is Ribosomal RNA large subunit methyltransferase Cfr of Bacillus velezensis (strain DSM 23117 / BGSC 10A6 / LMG 26770 / FZB42) (Bacillus amyloliquefaciens subsp. plantarum).